Reading from the N-terminus, the 498-residue chain is Glycylpeptide N-tetradecanoyltransferase 2 (498 aa).

The interval 1–87 (MAEDSESAAS…QPPSKNSTIP (87 aa)) is disordered. The segment covering 15-32 (ELDDQDTCGIDGDNEEET) has biased composition (acidic residues). At serine 38 the chain carries Phosphoserine. The span at 46–57 (KKKKKKQKRKKE) shows a compositional bias: basic residues. A compositionally biased stretch (polar residues) spans 61–72 (SGGTKSDSASDS). Tetradecanoyl-CoA-binding residues include histidine 117, tryptophan 122, leucine 250, valine 252, serine 258, arginine 260, valine 261, and alanine 262.

It belongs to the NMT family.

The protein localises to the cytoplasm. It is found in the membrane. It catalyses the reaction N-terminal glycyl-[protein] + tetradecanoyl-CoA = N-tetradecanoylglycyl-[protein] + CoA + H(+). It carries out the reaction N-terminal glycyl-L-lysyl-[protein] + tetradecanoyl-CoA = N-terminal glycyl-(N(6)-tetradecanoyl)-L-lysyl-[protein] + CoA + H(+). In terms of biological role, adds a myristoyl group to the N-terminal glycine residue of certain cellular and viral proteins. Also able to mediate N-terminal lysine myristoylation of proteins: catalyzes myristoylation of ARF6 on both 'Gly-2' and 'Lys-3'. Lysine myristoylation is required to maintain ARF6 on membranes during the GTPase cycle. The polypeptide is Glycylpeptide N-tetradecanoyltransferase 2 (NMT2) (Bos taurus (Bovine)).